A 582-amino-acid polypeptide reads, in one-letter code: Transcription factor tau subunit sfc6 (582 aa).

Residues Met1–Leu97 form a disordered region. A compositionally biased stretch (acidic residues) spans Glu18–Ile39. Over residues Gln63–Gly87 the composition is skewed to polar residues. 3 WD repeats span residues Thr221–Ser262, His268–His314, and Phe326–Leu369.

As to quaternary structure, component of the TFIIIC complex including sfc1, sfc3, sfc4, sfc6 and sfc7. The subunits are organized in two globular domains, tauA and tauB, connected by a proteolysis-sensitive and flexible linker. Interacts with sfc1, sfc3 and sfc4.

The protein resides in the nucleus. TFIIIC mediates tRNA and 5S RNA gene activation by binding to intragenic promoter elements. Upstream of the transcription start site, TFIIIC assembles the initiation complex TFIIIB-TFIIIC-tDNA, which is sufficient for RNA polymerase III recruitment and function. Part of the tauB domain of TFIIIC that binds boxB DNA promoter sites of tRNA and similar genes. Cooperates with sfc3 in DNA binding. Localizes to chromatin insulator sequence without recruiting RNA polymerase III and plays a role in nuclear organization. In Schizosaccharomyces pombe (strain 972 / ATCC 24843) (Fission yeast), this protein is Transcription factor tau subunit sfc6.